Reading from the N-terminus, the 3637-residue chain is Replicase polyprotein 1ab (3637 aa).

The segment at 8-28 adopts a C4-type; atypical zinc-finger fold; it reads CLCTPNARVFWERGQVYCTRC. Residues 69 to 181 enclose the Peptidase C31 domain; that stretch reads ECRPGGMCWL…KGLCPFADAR (113 aa). The segment at 69-183 is PCP1-alpha; sequence ECRPGGMCWL…LCPFADARAN (115 aa). Residues Cys-76 and His-147 each act as for Nsp1-alpha papain-like cysteine proteinase activity in the active site. The tract at residues 262-380 is PCP1-beta; it reads RDTKFSKCWE…KFRFQTRKYY (119 aa). One can recognise a Peptidase C32 domain in the interval 262 to 381; it reads RDTKFSKCWE…FRFQTRKYYG (120 aa). Active-site for Nsp1-beta papain-like cysteine proteinase activity residues include Cys-269 and His-340. Residues 381–486 form the Peptidase C33 domain; that stretch reads GYSPPGDGAC…RGVCGECEMG (106 aa). Active-site for Nsp2 cysteine proteinase activity residues include Cys-390 and His-456. 2 disordered regions span residues 676–743 and 865–899; these read CKPK…AALK and QQKT…GVSL. The segment covering 678-689 has biased composition (basic residues); it reads PKRKRSRKKKTR. 2 stretches are compositionally biased toward basic and acidic residues: residues 714-727 and 873-895; these read DTRE…KAEK and GERE…KRDL. 7 helical membrane-spanning segments follow: residues 940–960, 981–1001, 1083–1103, 1287–1307, 1362–1382, 1390–1410, and 1423–1443; these read WLNH…SFIF, VLLC…CVFG, FYFL…AVAL, IADF…SAWL, ALMV…SLLV, CLLM…PFVL, and VQFF…VVLI. Residues 979–1103 form an HD1 region; the sequence is CCVLLCFYLP…LGLVFLAVAL (125 aa). Residues 1287–1446 are HD2; sequence IADFVCLGLY…ASVVVLISSW (160 aa). The 202-residue stretch at 1511 to 1712 folds into the Peptidase S32 domain; the sequence is GSLRTRGCAK…AVVESLPALE (202 aa). Active-site charge relay system; for 3C-like serine proteinase activity residues include His-1549, Asp-1574, and Ser-1626. A run of 5 helical transmembrane segments spans residues 1735–1755, 1761–1781, 1801–1821, 1824–1844, and 1853–1873; these read DVPV…VMLA, FALS…AVAF, LVIA…LGQL, CCLM…LYLG, and EIFF…SLFK. Residues 1735–1872 are HD3; the sequence is DVPVIRIAFF…MFLPLFLSLF (138 aa). The 159-residue stretch at 2214–2372 folds into the NiRAN domain; that stretch reads SLNGLQQASA…LPYKLHPVRG (159 aa). In terms of domain architecture, RdRp catalytic spans 2611–2745; it reads GRCLEADLAS…YDESSELPNY (135 aa). Residues 2865-2928 form the AV ZBD domain; that stretch reads KKKCRTCAHC…SPVMSLNTEL (64 aa). Positions 2871, 2874, 2884, 2889, 2892, 2894, 2896, 2898, 2905, 2907, 2914, and 2917 each coordinate Zn(2+). One can recognise a (+)RNA virus helicase ATP-binding domain in the interval 2985–3137; it reads QVMKVAQTCA…AFALMLGRQL (153 aa). 3013–3020 contacts ATP; it reads GAPGTGKT. The region spanning 3138-3269 is the (+)RNA virus helicase C-terminal domain; the sequence is IEVFRFGPSI…CGEQPMMISE (132 aa). One can recognise an AV-Nsp11N/CoV-Nsp15M domain in the interval 3293–3389; it reads EGTASPLPQV…LTKFLKGKPV (97 aa). The NendoU domain maps to 3391 to 3513; the sequence is LPDSLMSTGR…MVWKDATAYF (123 aa). Active-site residues include His-3422, His-3437, and Lys-3466.

It belongs to the arteriviridae polyprotein family. Specific enzymatic cleavages in vivo by its own proteases yield mature proteins. There are two alternative pathways for processing. Either nsp4-5 is cleaved, which represents the major pathway or the nsp5-6 and nsp6-7 are processed, which represents the minor pathway. The major pathway occurs when nsp2 acts as a cofactor for nsp4.

It is found in the host membrane. Its subcellular location is the host cytoplasm. The protein localises to the host perinuclear region. The catalysed reaction is RNA(n) + a ribonucleoside 5'-triphosphate = RNA(n+1) + diphosphate. The enzyme catalyses ATP + H2O = ADP + phosphate + H(+). It carries out the reaction uridylyl-uridylyl-ribonucleotide-RNA = a 3'-end uridylyl-2',3'-cyclophospho-uridine-RNA + a 5'-end dephospho-ribonucleoside-RNA. Its function is as follows. The replicase polyprotein 1ab is a multifunctional protein: it contains the activities necessary for the transcription of negative stranded RNA, leader RNA, subgenomic mRNAs and progeny virion RNA as well as proteinases responsible for the cleavage of the polyprotein into functional products. The Nsp1 chain is essential for viral subgenomic mRNA synthesis. Functionally, the 3C-like serine proteinase chain is responsible for the majority of cleavages as it cleaves the C-terminus of the polyprotein. In terms of biological role, the helicase chain, which contains a zinc finger structure, displays RNA and DNA duplex-unwinding activities with 5' to 3' polarity. Its function is as follows. Plays a role in viral transcription/replication and prevents the simultaneous activation of host cell dsRNA sensors, such as MDA5/IFIH1, OAS, and PKR. Acts by degrading the 5'-polyuridines generated during replication of the poly(A) region of viral genomic and subgenomic RNAs. Catalyzes a two-step reaction in which a 2'3'-cyclic phosphate (2'3'-cP) is first generated by 2'-O transesterification, which is then hydrolyzed to a 3'-phosphate (3'-P). If not degraded, poly(U) RNA would hybridize with poly(A) RNA tails and activate host dsRNA sensors. In Mus musculus domesticus (western European house mouse), this protein is Replicase polyprotein 1ab (rep).